Consider the following 291-residue polypeptide: Acetyl-coenzyme A carboxylase carboxyl transferase subunit beta (291 aa).

Positions 23-291 (VYTKDPVSGE…TPASASVAKS (269 aa)) constitute a CoA carboxyltransferase N-terminal domain.

This sequence belongs to the AccD/PCCB family. As to quaternary structure, acetyl-CoA carboxylase is a heterohexamer composed of biotin carboxyl carrier protein (AccB), biotin carboxylase (AccC) and two subunits each of ACCase subunit alpha (AccA) and ACCase subunit beta (AccD).

It localises to the cytoplasm. It catalyses the reaction N(6)-carboxybiotinyl-L-lysyl-[protein] + acetyl-CoA = N(6)-biotinyl-L-lysyl-[protein] + malonyl-CoA. The protein operates within lipid metabolism; malonyl-CoA biosynthesis; malonyl-CoA from acetyl-CoA: step 1/1. In terms of biological role, component of the acetyl coenzyme A carboxylase (ACC) complex. Biotin carboxylase (BC) catalyzes the carboxylation of biotin on its carrier protein (BCCP) and then the CO(2) group is transferred by the transcarboxylase to acetyl-CoA to form malonyl-CoA. The sequence is that of Acetyl-coenzyme A carboxylase carboxyl transferase subunit beta from Opitutus terrae (strain DSM 11246 / JCM 15787 / PB90-1).